A 311-amino-acid chain; its full sequence is HPr kinase/phosphorylase (311 aa).

Active-site residues include His138 and Lys159. Residue 153-160 (GSSGIGKS) coordinates ATP. Residue Ser160 coordinates Mg(2+). The active-site Proton acceptor; for phosphorylation activity. Proton donor; for dephosphorylation activity is the Asp177. The tract at residues 201-210 (LEIRGVGIIN) is important for the catalytic mechanism of both phosphorylation and dephosphorylation. Residue Glu202 coordinates Mg(2+). Arg243 is an active-site residue. The important for the catalytic mechanism of dephosphorylation stretch occupies residues 264–269 (PVRPGR).

This sequence belongs to the HPrK/P family. Homohexamer. Requires Mg(2+) as cofactor.

It carries out the reaction [HPr protein]-L-serine + ATP = [HPr protein]-O-phospho-L-serine + ADP + H(+). The enzyme catalyses [HPr protein]-O-phospho-L-serine + phosphate + H(+) = [HPr protein]-L-serine + diphosphate. Functionally, catalyzes the ATP- as well as the pyrophosphate-dependent phosphorylation of a specific serine residue in HPr, a phosphocarrier protein of the phosphoenolpyruvate-dependent sugar phosphotransferase system (PTS). HprK/P also catalyzes the pyrophosphate-producing, inorganic phosphate-dependent dephosphorylation (phosphorolysis) of seryl-phosphorylated HPr (P-Ser-HPr). The two antagonistic activities of HprK/P are regulated by several intracellular metabolites, which change their concentration in response to the absence or presence of rapidly metabolisable carbon sources (glucose, fructose, etc.) in the growth medium. Therefore, by controlling the phosphorylation state of HPr, HPrK/P is a sensor enzyme that plays a major role in the regulation of carbon metabolism and sugar transport: it mediates carbon catabolite repression (CCR), and regulates PTS-catalyzed carbohydrate uptake and inducer exclusion. The protein is HPr kinase/phosphorylase of Brevibacillus brevis (strain 47 / JCM 6285 / NBRC 100599).